We begin with the raw amino-acid sequence, 647 residues long: Threonine--tRNA ligase (647 aa).

Residues 1–61 (MIKITFPDGA…EEDGSIEIVT (61 aa)) form the TGS domain. Positions 240–538 (DHRKLGKELD…LIETYKGAFP (299 aa)) are catalytic. Positions 334, 385, and 515 each coordinate Zn(2+).

The protein belongs to the class-II aminoacyl-tRNA synthetase family. Homodimer. Zn(2+) is required as a cofactor.

It localises to the cytoplasm. It catalyses the reaction tRNA(Thr) + L-threonine + ATP = L-threonyl-tRNA(Thr) + AMP + diphosphate + H(+). In terms of biological role, catalyzes the attachment of threonine to tRNA(Thr) in a two-step reaction: L-threonine is first activated by ATP to form Thr-AMP and then transferred to the acceptor end of tRNA(Thr). Also edits incorrectly charged L-seryl-tRNA(Thr). This Streptococcus agalactiae serotype V (strain ATCC BAA-611 / 2603 V/R) protein is Threonine--tRNA ligase.